The sequence spans 193 residues: Putative manganese efflux pump MntP (193 aa).

A run of 6 helical transmembrane segments spans residues 8–28 (LLAI…GIIL), 37–57 (LVMA…GWMF), 61–81 (FSHL…AFLG), 109–129 (MAIA…LLGI), 138–158 (PILI…YFGI), and 172–192 (LWGG…HLFL).

This sequence belongs to the MntP (TC 9.B.29) family.

The protein resides in the cell inner membrane. Its function is as follows. Probably functions as a manganese efflux pump. This is Putative manganese efflux pump MntP from Bacteroides thetaiotaomicron (strain ATCC 29148 / DSM 2079 / JCM 5827 / CCUG 10774 / NCTC 10582 / VPI-5482 / E50).